The sequence spans 85 residues: Large ribosomal subunit protein bL27 (85 aa).

Residues 1–22 (MAHKKAGGSSRNGRDSESKRLG) form a disordered region.

This sequence belongs to the bacterial ribosomal protein bL27 family.

The chain is Large ribosomal subunit protein bL27 from Tolumonas auensis (strain DSM 9187 / NBRC 110442 / TA 4).